The chain runs to 441 residues: Interferon-related developmental regulator 2 (441 aa).

Residues 1–15 (MPRARKGNALRKGGQ) are compositionally biased toward basic residues. A disordered region spans residues 1-51 (MPRARKGNALRKGGQRRGGGARSSTQADSGSSEDEAASEARSTTSDCPSLL).

Belongs to the IFRD family. As to quaternary structure, associates with ribosomes; promoting ribosome inactivation.

Ribosome-binding protein that acts as an inhibitor of mRNA translation by promoting ribosome inactivation. Associates with the P- and E-sites of the ribosome and inserts a C-terminal helix into the mRNA exit channel to preclude translation. The sequence is that of Interferon-related developmental regulator 2 from Mus musculus (Mouse).